Consider the following 597-residue polypeptide: Elongation factor 4 (597 aa).

The region spanning 2 to 184 (DHIRNFSIIA…SLIAKVPPPK (183 aa)) is the tr-type G domain. GTP-binding positions include 14–19 (DHGKST) and 131–134 (NKID).

The protein belongs to the TRAFAC class translation factor GTPase superfamily. Classic translation factor GTPase family. LepA subfamily.

It is found in the cell inner membrane. It catalyses the reaction GTP + H2O = GDP + phosphate + H(+). Required for accurate and efficient protein synthesis under certain stress conditions. May act as a fidelity factor of the translation reaction, by catalyzing a one-codon backward translocation of tRNAs on improperly translocated ribosomes. Back-translocation proceeds from a post-translocation (POST) complex to a pre-translocation (PRE) complex, thus giving elongation factor G a second chance to translocate the tRNAs correctly. Binds to ribosomes in a GTP-dependent manner. This is Elongation factor 4 from Burkholderia lata (strain ATCC 17760 / DSM 23089 / LMG 22485 / NCIMB 9086 / R18194 / 383).